The chain runs to 246 residues: Sugar fermentation stimulation protein homolog (246 aa).

This sequence belongs to the SfsA family.

The chain is Sugar fermentation stimulation protein homolog from Prochlorococcus marinus (strain MIT 9215).